The chain runs to 281 residues: Secretory carrier-associated membrane protein 5 (281 aa).

The segment at 1-49 is disordered; sequence MHHDPNPFDEGADDNPFSNGGGGGARRGGGGGGGGGGGGGKSQFSFGFG. Residues 1-139 are Cytoplasmic-facing; sequence MHHDPNPFDE…AQKLQYLAFA (139 aa). The span at 19–49 shows a compositional bias: gly residues; sequence NGGGGGARRGGGGGGGGGGGGGKSQFSFGFG. Positions 76–102 form a coiled coil; it reads KELLQWEADLKRREADIRRREEALKSA. The next 4 membrane-spanning stretches (helical) occupy residues 140–160, 167–187, 202–222, and 250–270; these read SWLGIVLCLFWNFIAVIVCWI, LFFLATIYGMLGMPLSYLMWY, FGWFFLCYMLHIAFCVFAAIA, and IFYFVGFALFCLETLVSIWVL. The Cytoplasmic segment spans residues 271–281; the sequence is QKVYMYFRGHK.

Belongs to the SCAMP family.

The protein localises to the cell membrane. It localises to the cytoplasmic vesicle. The protein resides in the secretory vesicle membrane. Probably involved in membrane trafficking. In Oryza sativa subsp. japonica (Rice), this protein is Secretory carrier-associated membrane protein 5 (SCAMP5).